The sequence spans 304 residues: Putative S-adenosyl-L-methionine-dependent methyltransferase MSMEG_1481/MSMEI_1445 (304 aa).

Residues aspartate 127 and 156–157 (DL) contribute to the S-adenosyl-L-methionine site.

It belongs to the UPF0677 family.

Its function is as follows. Exhibits S-adenosyl-L-methionine-dependent methyltransferase activity. This chain is Putative S-adenosyl-L-methionine-dependent methyltransferase MSMEG_1481/MSMEI_1445, found in Mycolicibacterium smegmatis (strain ATCC 700084 / mc(2)155) (Mycobacterium smegmatis).